Here is a 3019-residue protein sequence, read N- to C-terminus: MSTLPKPQRITKRNINRRPQDVKFPGGGQIVGGVYVLPRRGPKLGVRAVRKTSERSQPRSRRQPIPRARRTEGRSWAQPGYPWPLYGNEGCGWAGWLLSPRGSRPSWGPNDPRRRSRNLGKVIDTLTCGFADLMGYIPLVGAPVGGVARALAHGVRALEDGINFATGNLPGCSFSIFLLALLSCLLTPTAGLEYRNASGLYTVTNDCSNGSIVYEAGDVILHLPGCIPCVRLNNASKCWTPVSPTVAVSRPGAATASLRTHVDMMVGAATLCSALYVGDLCGALFLVGQGFSWRHRQHWTVQDCNCSIYPGHLTGHRMAWDMMMNWSPAMTLIVSQVLRLPQTMFDLVIGAHWGVMAGVAYYSMQGNWAKVFLVLCLFSGVDASTTITGGVAASGAFTITSLFSTGAKQPLHLVNTNGSWHINRTALNCNDSLNTGFIAGLLYYHKFNSSGCVERMSACSPLDRFAQGWGPLGPANISGPSSEKPYCWHYAPRPCDTVPAQSVCGPVYCFTPSPVVVGATDKRGAPTYTWGENESDVFLLESARPPTEPWFGCTWMNGSGYVKTCGAPPCHIYGGREGKSNNSLVCPTDCFRKHPDATYNRCGAGPWLTPRCLVDYPYRLWHYPCTVNYTIFKVRMFVGGLEHRFNAACNWTRGERCNLEDRDRSEMYPLLHSTTEQAILPCSFVPIPALSTGLIHLHQNIVDVQYLYGISSGLVGWAIKWEFVILIFLLLADARVCVVLWMMMLISQAEAALENLIVLNAISAAGTHGIWWSLVAFCVAWHVRGRIFPIAVYSIVGLWPLLLLVLMLPYRAYAWTGTDTSTLGAGVLSLFALFTLSPWYKHWIARLIWWNQYTIARCEAALQIWVPPLLARGARDGIILLAGLFYPALVFDITKLLLAILGPLYILQASLVRVPYFVRAHAVVRLCILVRNITGGKYVQMVLLALARGFNTYLYDHLSPMTDWAAEGLKDLAVAVEPVIFSPMEVKVITWGADTTACGDILCGLPVSARLGKEVLLGPADDYRSMGWRLLAPITAHAQQTRGLFGTIVTSLTGRDKNIVTGEIQVLSTSTQTFLGTSVGGVMWTVYHGAGSRTLAGNKRPALQMYTNVDQDLVGWPSPPGAKSLVPCTCGSADLYLITRDADVLPARRRGDSTASLLSPRPLACLKGSSGGPIMCPSGHVAGIFRAAVCTRGVAKALQFIPVESLSAQTRSPSFSDNSTPPAVPQTFQVGYLHAPTGSGESTKVPASYVAQGYTVLVLNPSVAATLGFGRFMSHAYGIDPNVRTGTRTITTGAKLTYSTYGKFLADGGCSGGAYDVIICDECHAQDATSILGIGTVLDQAETAGARLVVLATATPPGSITVPHSNIEEVALTGEGEIPFYGRAIPLGVIKGGRHLIFCHSKKKCDELAKQLTSLGVNAVAFYRGLDVSVIPTQGDVVVCATDALITGYTGDFDSVIDCNVAVEQYVDFSLDPTFSIETHTVPQDAVSRSQRRGRTGRGKSGTYRYVSPGERPSGMFDSVVLCECYDAGCAWYELTPSETTVRLRAYLSTPGLPVCQDHLEFWEGVFTGLTHIDAHFLSQTKQQGLNFPYLTAYQATVCARAAALPPSWDETWKCLIRLKPTLHGPTPLLYRLGAVQNEICTTHPVTKYIATCMAADLEVATSAWVLLGGVMAALTAYCLSVGSVVIVGHLVLGGKPALVPDKEVLYQQYDEMEECSRAAPYIEQAQGIAQQFKEKVIGLLQQADQKAADIKPIATPYWQKLETFWSKHMWNFVSGIQYLAGLSTLPGNPAIASLMAFTASVTSPLTTNQTLLFNIMGGWVASNLAPPPASTAFVVSGLAGAAVGSIGLGKVLLDILAGYGAGVAGALVAFKIMGGEMPSTEDMVNLLPAILSPGALVVGVICAAILRRHVGPGEGAVQWMNRLIAFASRGNHVAPTHYVPESDAAAKVTALLSSLTVTQLLRRLHQWINEDYPTPCDGNWLYDIWNWVCTVLADFKLWLGAKILPKMPGIPFLSCQKGYRGTWRGDGVVSTRCPCGALLSGHVKNGTMRLVGPRWCANTWHGTFPINGYTTGPSTPAPSYAYSRALWRVASDSYVEVRKVGDFHYVTGTTDDGLKCPCQVPLPEFFTELDGVRLHRYAPVCRPLLRDDVTFTVGLNSYVIGSQLPCEPEPDVAVVTSMLQDPSHITVETAKRRLDRGSPPSLASSSASQLSAPSRKATCTTHGRHPDAELITANLLWRQEMGSNITRVESESKVVILDSFEPLRACDDEDELSVAAECFKKPPKYPPALPIWARPDYNPPLVEPWKDPDYVPPTVHGCALPPQKLPPVPPPRRKRTIVLSESTVSKALASLAEKSFPQPTCSAEDESTSGVGTQSGSLTGPVQLDDDDSDNESHSSMPPLEGEPGDPDLSSGSWSTVSGEEQSVVCCSMSYSWTGALITPCAAEEEKLPISPLSNSLLRHHNLVYSTSSRSAAQRQKKVTFDRLQVLDDHYNTTLKEIKELASGVKAELLSVEEACRLVPSHSARSKFGYGAKEVRSLSSKAINHINSVWEDLLEDNTTPIPTTIMAKNEVFAVAPHKGGRKPARLIVYPDLGVRICEKRALYDVIQKLPSAIMGSAYGFQYSPKQRVEYLLKMWNSKKTPLGFSYDTRCFDSTVTEQDIRVEESIYQACDLKDEARRVITSLTERLYCGGPMFNSKGQHCGYRRCRASGVLPTSFGNTVTCYLKAKAATKAAGIKDPSFLVCGDDLVVIAESAGIDEDKSALRAFTEAMTRYSAPPGDPPQPTYDLELITSCSSNVSVAHDGAGKRYYYLTRDPETPLARAAWETARHTPVNSWLGNIIMYAPTIWVRMVIMTHFFSILQAQEQLEKALDFEMYGAVYSVTPLDLPAIIERLHGLSAFSLHSYSPVELNRVAGALRKLGIPPLRAWRHRARAVRAKLISQGGKAKICGLYLFNWAVRTKAKLTPLPQAGLLDLSRWFTVGAGGNDIYHSVSRARSRHLLLGLLLLTVGVGIFLLPAR.

Ser-2 bears the N-acetylserine; by host mark. An interaction with STAT1 region spans residues 2 to 23 (STLPKPQRITKRNINRRPQDVK). The interaction with EIF2AK2/PKR stretch occupies residues 2–58 (STLPKPQRITKRNINRRPQDVKFPGGGQIVGGVYVLPRRGPKLGVRAVRKTSERSQP). Positions 2–59 (STLPKPQRITKRNINRRPQDVKFPGGGQIVGGVYVLPRRGPKLGVRAVRKTSERSQPR) are interaction with DDX3X. The interval 2–75 (STLPKPQRIT…PRARRTEGRS (74 aa)) is disordered. The Cytoplasmic segment spans residues 2 to 168 (STLPKPQRIT…EDGINFATGN (167 aa)). 2 consecutive short sequence motifs (nuclear localization signal) follow at residues 5–13 (PKPQRITKR) and 38–43 (PRRGPK). A Phosphoserine; by host modification is found at Ser-53. Short sequence motifs (nuclear localization signal) lie at residues 58-64 (PRSRRQP) and 66-71 (PRARRT). Residues 58–68 (PRSRRQPIPRA) show a composition bias toward basic residues. Phosphoserine; by host is present on residues Ser-99 and Ser-116. Residues 112–152 (PRRRSRNLGKVIDTLTCGFADLMGYIPLVGAPVGGVARALA) form an important for endoplasmic reticulum and mitochondrial localization region. Positions 122-173 (VIDTLTCGFADLMGYIPLVGAPVGGVARALAHGVRALEDGINFATGNLPGCS) are interaction with APOA2. Residues 164–167 (FATG) form an important for lipid droplets localization region. A helical membrane pass occupies residues 169-189 (LPGCSFSIFLLALLSCLLTPT). Positions 178–191 (LLALLSCLLTPTAG) are cleaved as a propeptide — ER anchor for the core protein, removed in mature form by host signal peptidase. Residues 190–358 (AGLEYRNASG…IGAHWGVMAG (169 aa)) lie on the Lumenal side of the membrane. 3 N-linked (GlcNAc...) asparagine; by host glycosylation sites follow: Asn-196, Asn-209, and Asn-234. Residues 265–296 (MVGAATLCSALYVGDLCGALFLVGQGFSWRHR) are important for fusion. N-linked (GlcNAc...) asparagine; by host glycosylation occurs at Asn-305. A helical transmembrane segment spans residues 359-379 (VAYYSMQGNWAKVFLVLCLFS). At 380–730 (GVDASTTITG…WEFVILIFLL (351 aa)) the chain is on the lumenal side. The HVR1 stretch occupies residues 385 to 412 (TTITGGVAASGAFTITSLFSTGAKQPLH). 3 N-linked (GlcNAc...) (high mannose) asparagine; by host glycosylation sites follow: Asn-417, Asn-423, and Asn-430. Cystine bridges form between Cys-429–Cys-553, Cys-452–Cys-459, Cys-487–Cys-495, and Cys-504–Cys-509. A glycan (N-linked (GlcNAc...) asparagine; by host) is linked at Asn-448. The interval 475–479 (ANISG) is HVR2. The N-linked (GlcNAc...) asparagine; by host glycan is linked to Asn-476. The tract at residues 481 to 494 (SSEKPYCWHYAPRP) is CD81-binding 1. A glycan (N-linked (GlcNAc...) asparagine; by host) is linked at Asn-533. The CD81-binding 2 stretch occupies residues 545-552 (PPTEPWFG). Asn-557 carries an N-linked (GlcNAc...) asparagine; by host glycan. 4 disulfide bridges follow: Cys-565/Cys-570, Cys-586/Cys-590, Cys-602/Cys-625, and Cys-612/Cys-649. 2 N-linked (GlcNAc...) (high mannose) asparagine; by host glycosylation sites follow: Asn-628 and Asn-650. The cysteines at positions 657 and 682 are disulfide-linked. The segment at 665-676 (SEMYPLLHSTTE) is PKR/eIF2-alpha phosphorylation homology domain (PePHD). The helical transmembrane segment at 731–751 (LADARVCVVLWMMMLISQAEA) threads the bilayer. At 752 to 762 (ALENLIVLNAI) the chain is on the lumenal side. The chain crosses the membrane as a helical span at residues 763-783 (SAAGTHGIWWSLVAFCVAWHV). Topologically, residues 784-786 (RGR) are cytoplasmic. Residues 787 to 808 (IFPIAVYSIVGLWPLLLLVLML) form a helical membrane-spanning segment. Residues 809–818 (PYRAYAWTGT) are Lumenal-facing. A helical membrane pass occupies residues 819–839 (DTSTLGAGVLSLFALFTLSPW). The Cytoplasmic portion of the chain corresponds to 840-843 (YKHW). Residues 844 to 863 (IARLIWWNQYTIARCEAALQ) traverse the membrane as a helical segment. Topologically, residues 864-886 (IWVPPLLARGARDGIILLAGLFY) are lumenal. Residues 887–907 (PALVFDITKLLLAILGPLYIL) traverse the membrane as a helical segment. The region spanning 908 to 1031 (QASLVRVPYF…DYRSMGWRLL (124 aa)) is the Peptidase C18 domain. The Cytoplasmic portion of the chain corresponds to 908–1662 (QASLVRVPYF…CMAADLEVAT (755 aa)). Residues 909–1211 (ASLVRVPYFV…PVESLSAQTR (303 aa)) are protease NS2-3. The S-palmitoyl cysteine; by host moiety is linked to residue Cys-927. An interaction with host SCPS1 region spans residues 934-954 (TGGKYVQMVLLALARGFNTYL). Residues His-957, Glu-977, and Cys-998 each act as for protease NS2 activity; shared with dimeric partner in the active site. One can recognise a Peptidase S29 domain in the interval 1032–1213 (APITAHAQQT…ESLSAQTRSP (182 aa)). Active-site charge relay system; for serine protease NS3 activity residues include His-1088 and Asp-1112. The Zn(2+) site is built by Cys-1128 and Cys-1130. Ser-1170 functions as the Charge relay system; for serine protease NS3 activity in the catalytic mechanism. Residues Cys-1176 and His-1180 each coordinate Zn(2+). Residue 1235–1242 (APTGSGES) coordinates ATP. The Mg(2+) site is built by Ser-1242 and Glu-1322. The short motif at 1321 to 1324 (DECH) is the DECH box element. The Helicase C-terminal domain maps to 1366–1543 (NIEEVALTGE…ELTPSETTVR (178 aa)). A disordered region spans residues 1482 to 1505 (VPQDAVSRSQRRGRTGRGKSGTYR). An RNA-binding region spans residues 1491 to 1503 (QRRGRTGRGKSGT). A helical transmembrane segment spans residues 1663-1683 (SAWVLLGGVMAALTAYCLSVG). The segment at 1684-1695 (SVVIVGHLVLGG) is NS3-binding. At 1684-1810 (SVVIVGHLVL…SVTSPLTTNQ (127 aa)) the chain is on the cytoplasmic side. The helical transmembrane segment at 1811-1829 (TLLFNIMGGWVASNLAPPP) threads the bilayer. Topologically, residues 1830 to 1833 (ASTA) are lumenal. Residues 1834–1854 (FVVSGLAGAAVGSIGLGKVLL) form a helical membrane-spanning segment. Position 1855 (Asp-1855) is a topological domain, cytoplasmic. A helical membrane pass occupies residues 1856-1876 (ILAGYGAGVAGALVAFKIMGG). At 1877–1886 (EMPSTEDMVN) the chain is on the lumenal side. Residues 1887–1907 (LLPAILSPGALVVGVICAAIL) traverse the membrane as a helical segment. Topologically, residues 1908 to 1977 (RRHVGPGEGA…WINEDYPTPC (70 aa)) are cytoplasmic. Cys-1977 carries S-palmitoyl cysteine; by host lipidation. The stretch at 1978–2007 (DGNWLYDIWNWVCTVLADFKLWLGAKILPK) is an intramembrane region. The Cytoplasmic portion of the chain corresponds to 2008-2998 (MPGIPFLSCQ…YHSVSRARSR (991 aa)). Cys-2016, Cys-2034, Cys-2036, and Cys-2057 together coordinate Zn(2+). Positions 2125-2213 (EFFTELDGVR…ASSSASQLSA (89 aa)) are FKBP8-binding. The tract at residues 2125-2337 (EFFTELDGVR…PVPPPRRKRT (213 aa)) is transcriptional activation. The tract at residues 2140–2144 (PVCRP) is interaction with non-structural protein 4A. The segment at 2191 to 2225 (AKRRLDRGSPPSLASSSASQLSAPSRKATCTTHGR) is disordered. The interval 2194-2446 (RLDRGSPPSL…ALITPCAAEE (253 aa)) is interaction with host SKP2. 6 positions are modified to phosphoserine; by host: Ser-2199, Ser-2202, Ser-2206, Ser-2209, Ser-2212, and Ser-2215. Low complexity predominate over residues 2199–2215 (SPPSLASSSASQLSAPS). The interval 2215–2254 (SRKATCTTHGRHPDAELITANLLWRQEMGSNITRVESESK) is ISDR. The interval 2215–2280 (SRKATCTTHG…DELSVAAECF (66 aa)) is interaction with EIF2AK2/PKR. The segment at 2254–2311 (KVVILDSFEPLRACDDEDELSVAAECFKKPPKYPPALPIWARPDYNPPLVEPWKDPDY) is NS4B-binding. The interval 2304-2382 (EPWKDPDYVP…GTQSGSLTGP (79 aa)) is V3. The SH3-binding signature appears at 2327 to 2330 (PPVP). The short motif at 2332 to 2340 (PRRKRTIVL) is the Nuclear localization signal element. Lys-2355 is covalently cross-linked (Glycyl lysine isopeptide (Lys-Gly) (interchain with G-Cter in ubiquitin)). Residues 2356–2417 (SFPQPTCSAE…PDLSSGSWST (62 aa)) form a disordered region. A compositionally biased stretch (polar residues) spans 2369–2381 (TSGVGTQSGSLTG). A phosphoserine; by host mark is found at Ser-2457 and Ser-2470. The 119-residue stretch at 2642 to 2760 (PLGFSYDTRC…IAESAGIDED (119 aa)) folds into the RdRp catalytic domain. The Mg(2+) site is built by Asp-2648, Asp-2746, and Asp-2747. The chain crosses the membrane as a helical span at residues 2999–3019 (HLLLGLLLLTVGVGIFLLPAR).

It belongs to the hepacivirus polyprotein family. In terms of assembly, homooligomer. Interacts with E1 (via C-terminus). Interacts with the non-structural protein 5A. Interacts (via N-terminus) with host STAT1 (via SH2 domain); this interaction results in decreased STAT1 phosphorylation and ubiquitin-mediated proteasome-dependent STAT1 degradation, leading to decreased IFN-stimulated gene transcription. Interacts with host STAT3; this interaction constitutively activates STAT3. Interacts with host LTBR receptor. Interacts with host TNFRSF1A receptor and possibly induces apoptosis. Interacts with host HNRPK. Interacts with host YWHAE. Interacts with host UBE3A/E6AP. Interacts with host DDX3X. Interacts with host APOA2. Interacts with host RXRA protein. Interacts with host SP110 isoform 3/Sp110b; this interaction sequesters the transcriptional corepressor SP110 away from the nucleus. Interacts with host CREB3 nuclear transcription protein; this interaction triggers cell transformation. Interacts with host ACY3. Interacts with host C1QR1. Interacts with host RBM24; this interaction, which enhances the interaction of the mature core protein with 5'-UTR, may inhibit viral translation and favor replication. Interacts with host EIF2AK2/PKR; this interaction induces the autophosphorylation of EIF2AK2. Part of the viral assembly initiation complex composed of NS2, E1, E2, NS3, NS4A, NS5A and the mature core protein. As to quaternary structure, forms a heterodimer with envelope glycoprotein E2. Interacts with mature core protein. Interacts with protease NS2. The heterodimer E1/E2 interacts with host CLDN1; this interaction plays a role in viral entry into host cell. Interacts with host SPSB2 (via C-terminus). Part of the viral assembly initiation complex composed of NS2, E1, E2, NS3, NS4A, NS5A and the mature core protein. Interacts with host NEURL3; this interaction prevents E1 binding to glycoprotein E2. Forms a heterodimer with envelope glycoprotein E1. Interacts with host CD81 and SCARB1 receptors; these interactions play a role in viral entry into host cell. Interacts with host EIF2AK2/PKR; this interaction inhibits EIF2AK2 and probably allows the virus to evade the innate immune response. Interacts with host CD209/DC-SIGN and CLEC4M/DC-SIGNR. Interact with host SPCS1; this interaction is essential for viral particle assembly. Interacts with protease NS2. The heterodimer E1/E2 interacts with host CLDN1; this interaction plays a role in viral entry into host cell. Part of the viral assembly initiation complex composed of NS2, E1, E2, NS3, NS4A, NS5A and the mature core protein. Interacts with host SLC3A2/4F2hc; the interaction may facilitate viral entry into host cell. Interacts with human PLSCR1. In terms of assembly, homohexamer. Homoheptamer. Interacts with protease NS2. As to quaternary structure, homodimer. Interacts with host SPCS1; this interaction is essential for viral particle assembly. Interacts with envelope glycoprotein E1. Interacts with envelope glycoprotein E2. Interacts with viroporin p7. Interacts with serine protease/helicase NS3. Part of the replication complex composed of NS2, NS3, NS4A, NS4B, NS5A and the RNA-directed RNA polymerase embedded in an ER-derived membranous web. Part of the viral assembly initiation complex composed of NS2, E1, E2, NS3, NS4A, NS5A and the mature core protein. Interacts with protease NS2. Interacts with non-structural protein 4A; this interaction stabilizes the folding of NS3 serine protease. NS3-NS4A interaction is essential for NS3 activation and allows membrane anchorage of the latter. NS3/NS4A complex also prevents phosphorylation of host IRF3, thus preventing the establishment of dsRNA induced antiviral state. Interacts with host MAVS; this interaction leads to the cleavage and inhibition of host MAVS. Interacts with host TICAM1; this interaction leads to the cleavage and inhibition of host TICAM1. Interacts with host TANK-binding kinase/TBK1; this interaction results in the inhibition of the association between TBK1 and IRF3, which leads to the inhibition of IRF3 activation. Interacts with host RBM24. Part of the replication complex composed of NS2, NS3, NS4A, NS4B, NS5A and the RNA-directed RNA polymerase embedded in an ER-derived membranous web. Part of the viral assembly initiation complex composed of NS2, E1, E2, NS3, NS4A, NS5A and the mature core protein. In terms of assembly, interacts with NS3 serine protease; this interaction stabilizes the folding of NS3 serine protease. NS3-NS4A interaction is essential for NS3 activation and allows membrane anchorage of the latter. Interacts with non-structural protein 5A (via N-terminus). Part of the replication complex composed of NS2, NS3, NS4A, NS4B, NS5A and the RNA-directed RNA polymerase embedded in an ER-derived membranous web. Part of the viral assembly initiation complex composed of NS2, E1, E2, NS3, NS4A, NS5A and the mature core protein. As to quaternary structure, homomultimer. Interacts with non-structural protein NS5A. Interacts with host PLA2G4C; this interaction likely initiates the recruitment of replication complexes to lipid droplets. Interacts with host STING; this interaction disrupts the interaction between STING and TBK1 thereby suppressing the interferon signaling. Part of the replication complex composed of NS2, NS3, NS4A, NS4B, NS5A and the RNA-directed RNA polymerase embedded in an ER-derived membranous web. Monomer. Homodimer; dimerization is required for RNA-binding. Interacts with the mature core protein. Interacts (via N-terminus) with non-structural protein 4A. Interacts with non-structural protein 4B. Interacts (via region D2) with RNA-directed RNA polymerase. Part of the viral assembly initiation complex composed of NS2, E1, E2, NS3, NS4A, NS5A and the mature core protein. Part of the replication complex composed of NS2, NS3, NS4A, NS4B, NS5A and the RNA-directed RNA polymerase embedded in an ER-derived membranous web. Interacts with host GRB2. Interacts with host BIN1. Interacts with host PIK3R1. Interacts with host SRCAP. Interacts with host FKBP8. Interacts (via C-terminus) with host VAPB (via MSP domain). Interacts with host EIF2AK2/PKR; this interaction leads to disruption of EIF2AK2 dimerization by NS5A and probably allows the virus to evade the innate immune response. Interacts (via N-terminus) with host PACSIN2 (via N-terminus); this interaction attenuates protein kinase C alpha-mediated phosphorylation of PACSIN2 by disrupting the interaction between PACSIN2 and PRKCA. Interacts (via N-terminus) with host SRC kinase (via SH2 domain). Interacts with most Src-family kinases. Interacts with host IFI27 and SKP2; promotes the ubiquitin-mediated proteasomal degradation of NS5A. Interacts with host GPS2. Interacts with host TNFRSF21; this interaction allows the modulation by the virus of JNK, p38 MAPK, STAT3, and Akt signaling pathways in a DR6-dependent manner. Interacts (via N-terminus) with host CIDEB (via N-terminus); this interaction seems to regulate the association of HCV particles with APOE. Interacts with host CHKA/Choline Kinase-alpha; CHKA bridges host PI4KA and NS5A and potentiates NS5A-stimulated PI4KA activity, which then facilitates the targeting of the ternary complex to the ER for viral replication. Interacts with host SPSB2 (via C-terminus); this interaction targets NS5A for ubiquitination and degradation. Interacts with host RAB18; this interaction may promote the association of NS5A and other replicase components with lipid droplets. Interacts (via region D2) with host PPIA/CYPA; the interaction stimulates RNA-binding ability of NS5A and is dependent on the peptidyl-prolyl cis-trans isomerase activity of PPIA/CYPA. Interacts with host TRIM14; this interaction induces the degradation of NS5A. In terms of assembly, homooligomer. Interacts with non-structural protein 5A. Interacts with host VAPB. Interacts with host PRK2/PKN2. Interacts with host HNRNPA1 and SEPT6; these interactions facilitate viral replication. Part of the replication complex composed of NS2, NS3, NS4A, NS4B, NS5A and the RNA-directed RNA polymerase. The cofactor is Zn(2+). Requires Mg(2+) as cofactor. Post-translationally, specific enzymatic cleavages in vivo yield mature proteins. The structural proteins, core, E1, E2 and p7 are produced by proteolytic processing by host signal peptidases. The core protein precursor is synthesized as a 23 kDa, which is retained in the ER membrane through the hydrophobic signal peptide. Cleavage by the signal peptidase releases the 21 kDa mature core protein. The cleavage of the core protein precursor occurs between aminoacids 176 and 188 but the exact cleavage site is not known. Some degraded forms of the core protein appear as well during the course of infection. The other proteins (p7, NS2, NS3, NS4A, NS4B, NS5A and NS5B) are cleaved by the viral proteases. Autoprocessing between NS2 and NS3 is mediated by the NS2 cysteine protease catalytic domain and regulated by the NS3 N-terminal domain. In terms of processing, phosphorylated by host PKC and PKA. Ubiquitinated; mediated by UBE3A and leading to core protein subsequent proteasomal degradation. Post-translationally, highly N-glycosylated. In terms of processing, palmitoylation is required for NS2/3 autoprocessing and E2 recruitment to membranes. Palmitoylated. This modification may play a role in its polymerization or in protein-protein interactions. Post-translationally, phosphorylated on serines in a basal form termed p56. p58 is a hyperphosphorylated form of p56. p56 and p58 coexist in the cell in roughly equivalent amounts. Hyperphosphorylation is dependent on the presence of NS4A. Host CSNK1A1/CKI-alpha or RPS6KB1 kinases may be responsible for NS5A phosphorylation. In terms of processing, tyrosine phosphorylation is essential for the interaction with host SRC. Ubiquitinated. Ubiquitination, most probably at Lys-2355, mediated by host IFI27 and SKP2 leads to proteasomal degradation, restricting viral infection. Ubiquitination by host TRIM22 leads to interruption of viral replication. Post-translationally, the N-terminus is phosphorylated by host PRK2/PKN2.

The protein localises to the host endoplasmic reticulum membrane. Its subcellular location is the host mitochondrion membrane. The protein resides in the virion. It localises to the host cytoplasm. It is found in the host nucleus. The protein localises to the host lipid droplet. Its subcellular location is the virion membrane. The protein resides in the host mitochondrion. It localises to the host cell membrane. It is found in the host perinuclear region. It carries out the reaction Hydrolysis of four peptide bonds in the viral precursor polyprotein, commonly with Asp or Glu in the P6 position, Cys or Thr in P1 and Ser or Ala in P1'.. It catalyses the reaction a ribonucleoside 5'-triphosphate + H2O = a ribonucleoside 5'-diphosphate + phosphate + H(+). The enzyme catalyses ATP + H2O = ADP + phosphate + H(+). The catalysed reaction is RNA(n) + a ribonucleoside 5'-triphosphate = RNA(n+1) + diphosphate. Its activity is regulated as follows. Inhibited by the antiviral drug hexamethylene amiloride. Inhibition by amantadine appears to be genotype-dependent. Also inhibited by long-alkyl-chain iminosugar derivatives. Activity is up-regulated by PRK2/PKN2-mediated phosphorylation. Functionally, packages viral RNA to form a viral nucleocapsid, and promotes virion budding. Participates in the viral particle production as a result of its interaction with the non-structural protein 5A. Binds RNA and may function as a RNA chaperone to induce the RNA structural rearrangements taking place during virus replication. Modulates viral translation initiation by interacting with viral IRES and 40S ribosomal subunit. Affects various cell signaling pathways, host immunity and lipid metabolism. Prevents the establishment of cellular antiviral state by blocking the interferon-alpha/beta (IFN-alpha/beta) and IFN-gamma signaling pathways and by blocking the formation of phosphorylated STAT1 and promoting ubiquitin-mediated proteasome-dependent degradation of STAT1. Activates STAT3 leading to cellular transformation. Regulates the activity of cellular genes, including c-myc and c-fos. May repress the promoter of p53, and sequester CREB3 and SP110 isoform 3/Sp110b in the cytoplasm. Represses cell cycle negative regulating factor CDKN1A, thereby interrupting an important check point of normal cell cycle regulation. Targets transcription factors involved in the regulation of inflammatory responses and in the immune response: suppresses TNF-induced NF-kappa-B activation, and activates AP-1. Binds to dendritic cells (DCs) via C1QR1, resulting in down-regulation of T-lymphocytes proliferation. Alters lipid metabolism by interacting with hepatocellular proteins involved in lipid accumulation and storage. Induces up-regulation of FAS promoter activity, and thereby contributes to the increased triglyceride accumulation in hepatocytes (steatosis). Its function is as follows. Forms a heterodimer with envelope glycoprotein E2, which mediates virus attachment to the host cell, virion internalization through clathrin-dependent endocytosis and fusion with host membrane. Fusion with the host cell is most likely mediated by both E1 and E2, through conformational rearrangements of the heterodimer required for fusion rather than a classical class II fusion mechanism. E1/E2 heterodimer binds host apolipoproteins such as APOB and ApoE thereby forming a lipo-viro-particle (LVP). APOE associated to the LVP allows the initial virus attachment to cell surface receptors such as the heparan sulfate proteoglycans (HSPGs), syndecan-1 (SDC1), syndecan-1 (SDC2), the low-density lipoprotein receptor (LDLR) and scavenger receptor class B type I (SCARB1). The cholesterol transfer activity of SCARB1 allows E2 exposure and binding of E2 to SCARB1 and the tetraspanin CD81. E1/E2 heterodimer binding on CD81 activates the epithelial growth factor receptor (EGFR) signaling pathway. Diffusion of the complex E1-E2-EGFR-SCARB1-CD81 to the cell lateral membrane allows further interaction with Claudin 1 (CLDN1) and occludin (OCLN) to finally trigger HCV entry. In terms of biological role, forms a heterodimer with envelope glycoprotein E1, which mediates virus attachment to the host cell, virion internalization through clathrin-dependent endocytosis and fusion with host membrane. Fusion with the host cell is most likely mediated by both E1 and E2, through conformational rearrangements of the heterodimer required for fusion rather than a classical class II fusion mechanism. The interaction between envelope glycoprotein E2 and host apolipoprotein E/APOE allows the proper assembly, maturation and infectivity of the viral particles. This interaction is probably promoted via the up-regulation of cellular autophagy by the virus. E1/E2 heterodimer binds host apolipoproteins such as APOB and APOE thereby forming a lipo-viro-particle (LVP). APOE associated to the LVP allows the initial virus attachment to cell surface receptors such as the heparan sulfate proteoglycans (HSPGs), syndecan-1 (SDC1), syndecan-1 (SDC2), the low-density lipoprotein receptor (LDLR) and scavenger receptor class B type I (SCARB1). The cholesterol transfer activity of SCARB1 allows E2 exposure and binding of E2 to SCARB1 and the tetraspanin CD81. E1/E2 heterodimer binding on CD81 activates the epithelial growth factor receptor (EGFR) signaling pathway. Diffusion of the complex E1-E2-EGFR-SCARB1-CD81 to the cell lateral membrane allows further interaction with Claudin 1 (CLDN1) and occludin (OCLN) to finally trigger HCV entry. Inhibits host EIF2AK2/PKR activation, preventing the establishment of an antiviral state. Viral ligand for CD209/DC-SIGN and CLEC4M/DC-SIGNR, which are respectively found on dendritic cells (DCs), and on liver sinusoidal endothelial cells and macrophage-like cells of lymph node sinuses. These interactions allow the capture of circulating HCV particles by these cells and subsequent facilitated transmission to permissive cells such as hepatocytes and lymphocyte subpopulations. The interaction between E2 and host amino acid transporter complex formed by SLC3A2 and SLC7A5/LAT1 may facilitate viral entry into host cell. Ion channel protein that acts as a viroporin and plays an essential role in the assembly, envelopment and secretion of viral particles. Regulates the host cell secretory pathway, which induces the intracellular retention of viral glycoproteins and favors assembly of viral particles. Creates a pore in acidic organelles and releases Ca(2+) and H(+) in the cytoplasm of infected cells, leading to a productive viral infection. High levels of cytoplasmic Ca(2+) may trigger membrane trafficking and transport of viral ER-associated proteins to viroplasms, sites of viral genome replication. This ionic imbalance induces the assembly of the inflammasome complex, which triggers the maturation of pro-IL-1beta into IL-1beta through the action of caspase-1. Targets also host mitochondria and induces mitochondrial depolarization. In addition of its role as a viroporin, acts as a lipid raft adhesion factor. Functionally, cysteine protease required for the proteolytic auto-cleavage between the non-structural proteins NS2 and NS3. The N-terminus of NS3 is required for the function of NS2 protease (active region NS2-3). Promotes the initiation of viral particle assembly by mediating the interaction between structural and non-structural proteins. Its function is as follows. Displays three enzymatic activities: serine protease with a chymotrypsin-like fold, NTPase and RNA helicase. NS3 serine protease, in association with NS4A, is responsible for the cleavages of NS3-NS4A, NS4A-NS4B, NS4B-NS5A and NS5A-NS5B. The NS3/NS4A complex prevents phosphorylation of host IRF3, thus preventing the establishment of dsRNA induced antiviral state. The NS3/NS4A complex induces host amino acid transporter component SLC3A2, thus contributing to HCV propagation. NS3 RNA helicase binds to RNA and unwinds both dsDNA and dsRNA in the 3' to 5' direction, and likely resolves RNA complicated stable secondary structures in the template strand. Binds a single ATP and catalyzes the unzipping of a single base pair of dsRNA. Inhibits host antiviral proteins TBK1 and IRF3 thereby preventing the establishment of an antiviral state. Cleaves host MAVS/CARDIF thereby preventing the establishment of an antiviral state. Cleaves host TICAM1/TRIF, thereby disrupting TLR3 signaling and preventing the establishment of an antiviral state. In terms of biological role, induces a specific membrane alteration that serves as a scaffold for the virus replication complex. This membrane alteration gives rise to the so-called ER-derived membranous web that contains the replication complex. NS4B self-interaction contributes to its function in membranous web formation. Promotes host TRIF protein degradation in a CASP8-dependent manner thereby inhibiting host TLR3-mediated interferon signaling. Disrupts the interaction between STING and TBK1 contributing to the inhibition of interferon signaling. Phosphorylated protein that is indispensable for viral replication and assembly. Both hypo- and hyperphosphorylated states are required for the viral life cycle. The hyperphosphorylated form of NS5A is an inhibitor of viral replication. Involved in RNA-binding and especially in binding to the viral genome. Zinc is essential for RNA-binding. Participates in the viral particle production as a result of its interaction with the mature viral core protein. Its interaction with host VAPB may target the viral replication complex to vesicles. Down-regulates viral IRES translation initiation. Mediates interferon resistance, presumably by interacting with and inhibiting host EIF2AK2/PKR. Prevents BIN1-induced apoptosis. Acts as a transcriptional activator of some host genes important for viral replication when localized in the nucleus. Via the interaction with host PACSIN2, modulates lipid droplet formation in order to promote virion assembly. Modulates TNFRSF21/DR6 signaling pathway for viral propagation. Functionally, RNA-dependent RNA polymerase that performs primer-template recognition and RNA synthesis during viral replication. Initiates RNA transcription/replication at a flavin adenine dinucleotide (FAD), resulting in a 5'- FAD cap on viral RNAs. In this way, recognition of viral 5' RNA by host pattern recognition receptors can be bypassed, thereby evading activation of antiviral pathways. This is Genome polyprotein from Homo sapiens (Human).